Here is a 101-residue protein sequence, read N- to C-terminus: Interleukin-8 (101 aa).

A signal peptide spans 1-22 (MTSKLAVALLAAFLLSAALCEA). 2 cysteine pairs are disulfide-bonded: C34/C61 and C36/C77.

Belongs to the intercrine alpha (chemokine CxC) family. As to quaternary structure, homodimer. Interacts with TNFAIP6 (via Link domain); this interaction interferes with chemokine binding to glycosaminoglycans.

Its subcellular location is the secreted. Functionally, chemotactic factor that mediates inflammatory response by attracting neutrophils, basophils, and T-cells to clear pathogens and protect the host from infection. Also plays an important role in neutrophil activation. Released in response to an inflammatory stimulus, exerts its effect by binding to the G-protein-coupled receptors CXCR1 and CXCR2, primarily found in neutrophils, monocytes and endothelial cells. G-protein heterotrimer (alpha, beta, gamma subunits) constitutively binds to CXCR1/CXCR2 receptor and activation by IL8 leads to beta and gamma subunits release from Galpha (GNAI2 in neutrophils) and activation of several downstream signaling pathways including PI3K and MAPK pathways. This is Interleukin-8 (CXCL8) from Bos taurus (Bovine).